A 180-amino-acid polypeptide reads, in one-letter code: Peptidyl-tRNA hydrolase (180 aa).

Tyr-13 provides a ligand contact to tRNA. His-18 serves as the catalytic Proton acceptor. 3 residues coordinate tRNA: Tyr-58, Asn-60, and Asn-100.

It belongs to the PTH family. As to quaternary structure, monomer.

Its subcellular location is the cytoplasm. The catalysed reaction is an N-acyl-L-alpha-aminoacyl-tRNA + H2O = an N-acyl-L-amino acid + a tRNA + H(+). Functionally, hydrolyzes ribosome-free peptidyl-tRNAs (with 1 or more amino acids incorporated), which drop off the ribosome during protein synthesis, or as a result of ribosome stalling. Catalyzes the release of premature peptidyl moieties from peptidyl-tRNA molecules trapped in stalled 50S ribosomal subunits, and thus maintains levels of free tRNAs and 50S ribosomes. This is Peptidyl-tRNA hydrolase from Fervidobacterium nodosum (strain ATCC 35602 / DSM 5306 / Rt17-B1).